The sequence spans 179 residues: Probable chemoreceptor glutamine deamidase CheD 2 (179 aa).

It belongs to the CheD family.

It carries out the reaction L-glutaminyl-[protein] + H2O = L-glutamyl-[protein] + NH4(+). Its function is as follows. Probably deamidates glutamine residues to glutamate on methyl-accepting chemotaxis receptors (MCPs), playing an important role in chemotaxis. This is Probable chemoreceptor glutamine deamidase CheD 2 from Ruegeria sp. (strain TM1040) (Silicibacter sp.).